Here is a 1226-residue protein sequence, read N- to C-terminus: Receptor-type tyrosine-protein phosphatase O (1226 aa).

The N-terminal stretch at 1-29 (MGHLPRGTLGGRRLLPLLGLFVLLKIVTT) is a signal peptide. Residues 30–115 (FHVAVQDDNN…TKPSRSITVL (86 aa)) enclose the Fibronectin type-III 1 domain. The Extracellular portion of the chain corresponds to 30-832 (FHVAVQDDNN…VTEVNPNVVV (803 aa)). N-linked (GlcNAc...) asparagine glycosylation is found at asparagine 75, asparagine 154, and asparagine 227. A disordered region spans residues 242–305 (EPSGSFPEDS…PNSTDYESTS (64 aa)). Basic and acidic residues predominate over residues 260 to 270 (IGRDRRFHFPE). Residues 277-291 (PSNVSSGSPPSNVSS) show a composition bias toward low complexity. Asparagine 279 carries N-linked (GlcNAc...) asparagine glycosylation. Residues 296 to 305 (PNSTDYESTS) are compositionally biased toward polar residues. Fibronectin type-III domains lie at 339 to 435 (RTEK…ISPT), 445 to 541 (KPQH…IVPT), 542 to 638 (GIKD…TISF), 641 to 734 (APVA…LEPA), and 735 to 827 (PPKS…TEVN). N-linked (GlcNAc...) asparagine glycans are attached at residues asparagine 471 and asparagine 500. N-linked (GlcNAc...) asparagine glycans are attached at residues asparagine 710, asparagine 743, and asparagine 800. Residues 833–853 (ISVLAILSTLLIGLLLVTLVI) traverse the membrane as a helical segment. Over 854–1226 (LRKKHLQMAR…DVIYENVSKS (373 aa)) the chain is Cytoplasmic. Serine 875 bears the Phosphoserine mark. The Tyrosine-protein phosphatase domain occupies 948 to 1205 (FSLQFEELKL…IFIHQCVQLM (258 aa)). Substrate contacts are provided by residues aspartate 1112, 1146–1152 (CSAGVGR), and glutamine 1190. Residue cysteine 1146 is the Phosphocysteine intermediate of the active site. At tyrosine 1220 the chain carries Phosphotyrosine.

It belongs to the protein-tyrosine phosphatase family. Receptor class 3 subfamily. As to quaternary structure, interacts (phosphorylated form) with FYN and GRB2.

The protein resides in the membrane. It catalyses the reaction O-phospho-L-tyrosyl-[protein] + H2O = L-tyrosyl-[protein] + phosphate. In terms of biological role, possesses tyrosine phosphatase activity. Plays a role in regulating the glomerular pressure/filtration rate relationship through an effect on podocyte structure and function. This chain is Receptor-type tyrosine-protein phosphatase O (Ptpro), found in Mus musculus (Mouse).